A 45-amino-acid polypeptide reads, in one-letter code: Natriuretic peptide OsNP-d (45 aa).

Residues 1–5 constitute a propeptide that is removed on maturation; that stretch reads PAAGL. C14 and C30 are oxidised to a cystine.

Belongs to the natriuretic peptide family. As to expression, expressed by the venom gland.

The protein resides in the secreted. Snake venom natriuretic peptide that targets both NPR1 and NPR2. Exhibits hypotensive and vasodepressor activities. This Oxyuranus scutellatus scutellatus (Australian taipan) protein is Natriuretic peptide OsNP-d.